A 949-amino-acid chain; its full sequence is MLSKLLRLGEGRMVKRLKKVADYVGTLSDDVEKLTDAELRAKTDEFKRRLADQKNPETLDDLLPEAFAVAREAAWRVLDQRPFDVQVMGAAALHLGNVAEMKTGEGKTLTCVLPAYLNALAGNGVHIVTVNDYLAKRDSEWMGRVHRFLGLQVGVILATMTPDERRVAYNADITYGTNNEFGFDYLRDNMAHSLDDLVQRGHHYAIVDEVDSILIDEARTPLIISGPADGASNWYTEFARLAPLMEKDVHYEVDLRKRTVGVHEKGVEFVEDQLGIDNLYEAANSPLVSYLNNALKAKELFSRDKDYIVRDGEVLIVDEFTGRVLIGRRYNEGMHQAIEAKEHVEIKAENQTLATITLQNYFRLYDKLAGMTGTAQTEAAELHEIYKLGVVSIPTNMPMIREDQSDLIYKTEEAKYIAVVDDVAERYAKGQPVLIGTTSVERSEYLSRQFTKRRIPHNVLNAKYHEQEATIIAVAGRRGGVTVATNMAGRGTDIVLGGNVDFLTDQRLRERGLDPVETPEEYEAAWHSELPIVKEEASKEAKEVIEAGGLYVLGTERHESRRIDNQLRGRSGRQGDPGESRFYLSLGDELMRRFNGAALETLLTRLNLPDDVPIEAKMVTRAIKSAQTQVEQQNFEVRKNVLKYDEVMNQQRKVIYAERRRILEGENLKDQALDMVRDVITAYVDGATGEGYAEDWDLDALWTALKTLYPVGITADSLTRKDHEFERDDLTREELLEALLKDAERAYAAREAELEEIAGEGAMRQLERNVLLNVIDRKWREHLYEMDYLKEGIGLRAMAQRDPLVEYQREGYDMFMAMLDGMKEESVGFLFNVTVEAVPAPPVAPAAEPAELAEFAAAAAAAAQQRSAVDGGARERAPSALRAKGVASESPALTYSGPAEDGSAQVQRNGGGAHKTPAGVPAGASRRERREAARRQGRGAKPPKSVKKR.

Residues Gln-86, 104–108 (GEGKT), and Asp-493 contribute to the ATP site. A disordered region spans residues 869–949 (VDGGARERAP…AKPPKSVKKR (81 aa)). A compositionally biased stretch (basic and acidic residues) spans 925–934 (SRRERREAAR).

This sequence belongs to the SecA family. As to quaternary structure, monomer and homodimer. Part of the essential Sec protein translocation apparatus which comprises SecA, SecYEG and auxiliary proteins SecDF. Other proteins may also be involved.

The protein localises to the cell membrane. Its subcellular location is the cytoplasm. It catalyses the reaction ATP + H2O + cellular proteinSide 1 = ADP + phosphate + cellular proteinSide 2.. Part of the Sec protein translocase complex. Interacts with the SecYEG preprotein conducting channel. Has a central role in coupling the hydrolysis of ATP to the transfer of proteins into and across the cell membrane, serving as an ATP-driven molecular motor driving the stepwise translocation of polypeptide chains across the membrane. This chain is Protein translocase subunit SecA 1, found in Mycobacterium bovis (strain ATCC BAA-935 / AF2122/97).